Here is a 233-residue protein sequence, read N- to C-terminus: 7-cyano-7-deazaguanine synthase (233 aa).

7-17 (CSGGLDSVSLA) contributes to the ATP binding site. The Zn(2+) site is built by C185, C193, C196, and C199.

It belongs to the QueC family. Zn(2+) serves as cofactor.

The enzyme catalyses 7-carboxy-7-deazaguanine + NH4(+) + ATP = 7-cyano-7-deazaguanine + ADP + phosphate + H2O + H(+). The protein operates within purine metabolism; 7-cyano-7-deazaguanine biosynthesis. Its function is as follows. Catalyzes the ATP-dependent conversion of 7-carboxy-7-deazaguanine (CDG) to 7-cyano-7-deazaguanine (preQ(0)). The sequence is that of 7-cyano-7-deazaguanine synthase from Ruegeria sp. (strain TM1040) (Silicibacter sp.).